A 199-amino-acid chain; its full sequence is Small ribosomal subunit protein uS4 (199 aa).

The S4 RNA-binding domain occupies 91–153 (ARLDNVVYRM…SKNFVVIKEA (63 aa)).

Belongs to the universal ribosomal protein uS4 family. In terms of assembly, part of the 30S ribosomal subunit. Contacts protein S5. The interaction surface between S4 and S5 is involved in control of translational fidelity.

In terms of biological role, one of the primary rRNA binding proteins, it binds directly to 16S rRNA where it nucleates assembly of the body of the 30S subunit. Its function is as follows. With S5 and S12 plays an important role in translational accuracy. In Exiguobacterium sibiricum (strain DSM 17290 / CCUG 55495 / CIP 109462 / JCM 13490 / 255-15), this protein is Small ribosomal subunit protein uS4.